Reading from the N-terminus, the 336-residue chain is Protein-arginine kinase (336 aa).

The 224-residue stretch at Ile-22–Ile-245 folds into the Phosphagen kinase C-terminal domain. ATP-binding positions include Ser-25 to Arg-29, His-83, Arg-116, Arg-167 to Met-171, and Arg-198 to Glu-203.

This sequence belongs to the ATP:guanido phosphotransferase family.

The catalysed reaction is L-arginyl-[protein] + ATP = N(omega)-phospho-L-arginyl-[protein] + ADP + H(+). Functionally, catalyzes the specific phosphorylation of arginine residues in proteins. The polypeptide is Protein-arginine kinase (Staphylococcus saprophyticus subsp. saprophyticus (strain ATCC 15305 / DSM 20229 / NCIMB 8711 / NCTC 7292 / S-41)).